The primary structure comprises 145 residues: uncharacterized protein (145 aa).

The CBM3 domain occupies 1-145; that stretch reads LQYRAADTNA…NGQIVWGTAP (145 aa).

This is an uncharacterized protein from Paenibacillus lautus (Bacillus lautus).